The primary structure comprises 502 residues: Archaemetzincin-1 (502 aa).

His262 contacts Zn(2+). Residue Glu263 is the Proton acceptor of the active site. Residues His266, Cys273, Cys278, Cys297, and Cys300 each contribute to the Zn(2+) site. The segment at 336-383 (GEPSVSEDTLPFSADSGMGCESDTEPVTSPSEPVTPDGWSHPFPDGPE) is disordered.

Belongs to the peptidase M54 family. Zn(2+) is required as a cofactor.

Probable zinc metalloprotease. In Mus musculus (Mouse), this protein is Archaemetzincin-1 (Amz1).